We begin with the raw amino-acid sequence, 415 residues long: Tyrosine--tRNA ligase (415 aa).

An L-tyrosine-binding site is contributed by tyrosine 34. Positions 39–48 (PTSDSLTVGH) match the 'HIGH' region motif. Residues tyrosine 164 and glutamine 168 each contribute to the L-tyrosine site. The short motif at 225–229 (KFGKS) is the 'KMSKS' region element. Lysine 228 lines the ATP pocket. An S4 RNA-binding domain is found at 348-414 (IPLSEALVKT…GKKNNSLIIL (67 aa)).

The protein belongs to the class-I aminoacyl-tRNA synthetase family. TyrS type 1 subfamily. As to quaternary structure, homodimer.

The protein localises to the cytoplasm. The enzyme catalyses tRNA(Tyr) + L-tyrosine + ATP = L-tyrosyl-tRNA(Tyr) + AMP + diphosphate + H(+). In terms of biological role, catalyzes the attachment of tyrosine to tRNA(Tyr) in a two-step reaction: tyrosine is first activated by ATP to form Tyr-AMP and then transferred to the acceptor end of tRNA(Tyr). This chain is Tyrosine--tRNA ligase, found in Phytoplasma australiense.